The primary structure comprises 89 residues: Small ribosomal subunit protein uS15 (89 aa).

It belongs to the universal ribosomal protein uS15 family. In terms of assembly, part of the 30S ribosomal subunit. Forms a bridge to the 50S subunit in the 70S ribosome, contacting the 23S rRNA.

One of the primary rRNA binding proteins, it binds directly to 16S rRNA where it helps nucleate assembly of the platform of the 30S subunit by binding and bridging several RNA helices of the 16S rRNA. Functionally, forms an intersubunit bridge (bridge B4) with the 23S rRNA of the 50S subunit in the ribosome. This chain is Small ribosomal subunit protein uS15, found in Edwardsiella ictaluri (strain 93-146).